The primary structure comprises 615 residues: Alpha-terpinene synthase TPS33PK, chloroplastic (615 aa).

A chloroplast-targeting transit peptide spans 1–33 (MFCRLGVHQFSPLSLILNTTKLARASTLSSACY). (2E)-geranyl diphosphate-binding residues include E334, V371, L375, L513, and S516. Mg(2+)-binding residues include V371 and L375. A DDXXD motif motif is present at residues 371–375 (VYGTL). 3 residues coordinate Mg(2+): S516, M520, and D524.

It belongs to the terpene synthase family. Tpsb subfamily. It depends on Mg(2+) as a cofactor. Mn(2+) serves as cofactor.

The protein localises to the plastid. The protein resides in the chloroplast. The catalysed reaction is (2E)-geranyl diphosphate = alpha-terpinene + diphosphate. It catalyses the reaction (2E)-geranyl diphosphate = gamma-terpinene + diphosphate. It participates in secondary metabolite biosynthesis; terpenoid biosynthesis. Involved in monoterpene (C10) olefins biosynthesis, constituants of cannabinoids and terpenoids-rich resins. Catalyzes mainly the conversion of (2E)-geranyl diphosphate to alpha-terpinene and gamma-terpinene. The protein is Alpha-terpinene synthase TPS33PK, chloroplastic of Cannabis sativa (Hemp).